A 172-amino-acid polypeptide reads, in one-letter code: MHYARIVSNLRLGYDIIHMAEYVTLTTNRKAFHNYFLEEKYEAGIMLLGTEIKSLRSGRVNMGDAYVKPQRGELWLVNAHISAYECSGHTSHEPMRERKLLMHRKEIALLMSKVKEKGLTLIPVRIYLKNDIAKVELSLGRGKKLYDKRDTVTKRDTERELEREVKYRNFRR.

This sequence belongs to the SmpB family.

The protein localises to the cytoplasm. In terms of biological role, required for rescue of stalled ribosomes mediated by trans-translation. Binds to transfer-messenger RNA (tmRNA), required for stable association of tmRNA with ribosomes. tmRNA and SmpB together mimic tRNA shape, replacing the anticodon stem-loop with SmpB. tmRNA is encoded by the ssrA gene; the 2 termini fold to resemble tRNA(Ala) and it encodes a 'tag peptide', a short internal open reading frame. During trans-translation Ala-aminoacylated tmRNA acts like a tRNA, entering the A-site of stalled ribosomes, displacing the stalled mRNA. The ribosome then switches to translate the ORF on the tmRNA; the nascent peptide is terminated with the 'tag peptide' encoded by the tmRNA and targeted for degradation. The ribosome is freed to recommence translation, which seems to be the essential function of trans-translation. The polypeptide is SsrA-binding protein (Dehalococcoides mccartyi (strain CBDB1)).